We begin with the raw amino-acid sequence, 105 residues long: Nucleoid-associated protein TTHA1599 (105 aa).

This sequence belongs to the YbaB/EbfC family. As to quaternary structure, homodimer.

It localises to the cytoplasm. Its subcellular location is the nucleoid. Binds to DNA and alters its conformation. May be involved in regulation of gene expression, nucleoid organization and DNA protection. The protein is Nucleoid-associated protein TTHA1599 of Thermus thermophilus (strain ATCC 27634 / DSM 579 / HB8).